Reading from the N-terminus, the 266-residue chain is Glutamate racemase (266 aa).

Substrate-binding positions include 9–10 and 41–42; these read DS and YG. C72 acts as the Proton donor/acceptor in catalysis. 73–74 contacts substrate; the sequence is NT. C184 acts as the Proton donor/acceptor in catalysis. Substrate is bound at residue 185–186; the sequence is TH.

Belongs to the aspartate/glutamate racemases family.

It carries out the reaction L-glutamate = D-glutamate. It functions in the pathway cell wall biogenesis; peptidoglycan biosynthesis. Provides the (R)-glutamate required for cell wall biosynthesis. The protein is Glutamate racemase of Staphylococcus aureus (strain Mu3 / ATCC 700698).